A 218-amino-acid chain; its full sequence is Thiopurine S-methyltransferase (218 aa).

S-adenosyl-L-methionine contacts are provided by W10, L45, E66, and R123.

Belongs to the class I-like SAM-binding methyltransferase superfamily. TPMT family.

It localises to the cytoplasm. It catalyses the reaction S-adenosyl-L-methionine + a thiopurine = S-adenosyl-L-homocysteine + a thiopurine S-methylether.. This chain is Thiopurine S-methyltransferase, found in Xanthomonas campestris pv. campestris (strain 8004).